A 360-amino-acid polypeptide reads, in one-letter code: Phospho-N-acetylmuramoyl-pentapeptide-transferase (360 aa).

The next 10 membrane-spanning stretches (helical) occupy residues 2–22 (IAIL…TPLF), 52–72 (MGGV…NISA), 80–100 (GLLL…DDFI), 114–134 (WKII…LQFP), 156–176 (LAFA…NFLI), 189–209 (LDGL…VVTM), 235–255 (LAIV…WNAS), 259–279 (IFMG…LSIL), 284–304 (FLAV…VIQI), and 338–358 (FWLI…AEWV).

It belongs to the glycosyltransferase 4 family. MraY subfamily. It depends on Mg(2+) as a cofactor.

It is found in the cell membrane. It carries out the reaction UDP-N-acetyl-alpha-D-muramoyl-L-alanyl-gamma-D-glutamyl-meso-2,6-diaminopimeloyl-D-alanyl-D-alanine + di-trans,octa-cis-undecaprenyl phosphate = di-trans,octa-cis-undecaprenyl diphospho-N-acetyl-alpha-D-muramoyl-L-alanyl-D-glutamyl-meso-2,6-diaminopimeloyl-D-alanyl-D-alanine + UMP. It participates in cell wall biogenesis; peptidoglycan biosynthesis. Catalyzes the initial step of the lipid cycle reactions in the biosynthesis of the cell wall peptidoglycan: transfers peptidoglycan precursor phospho-MurNAc-pentapeptide from UDP-MurNAc-pentapeptide onto the lipid carrier undecaprenyl phosphate, yielding undecaprenyl-pyrophosphoryl-MurNAc-pentapeptide, known as lipid I. The protein is Phospho-N-acetylmuramoyl-pentapeptide-transferase of Beutenbergia cavernae (strain ATCC BAA-8 / DSM 12333 / CCUG 43141 / JCM 11478 / NBRC 16432 / NCIMB 13614 / HKI 0122).